Here is a 550-residue protein sequence, read N- to C-terminus: Glucose-6-phosphate isomerase (550 aa).

E356 serves as the catalytic Proton donor. Catalysis depends on residues H387 and K515.

Belongs to the GPI family.

The protein resides in the cytoplasm. It carries out the reaction alpha-D-glucose 6-phosphate = beta-D-fructose 6-phosphate. The protein operates within carbohydrate biosynthesis; gluconeogenesis. Its pathway is carbohydrate degradation; glycolysis; D-glyceraldehyde 3-phosphate and glycerone phosphate from D-glucose: step 2/4. Its function is as follows. Catalyzes the reversible isomerization of glucose-6-phosphate to fructose-6-phosphate. This chain is Glucose-6-phosphate isomerase, found in Syntrophobacter fumaroxidans (strain DSM 10017 / MPOB).